The chain runs to 109 residues: Cell division protein ZapA (109 aa).

Residues 22–99 are a coiled coil; it reads EQQDALNMAA…IEQALLEQGR (78 aa).

This sequence belongs to the ZapA family. Type 1 subfamily. As to quaternary structure, homodimer. Interacts with FtsZ.

Its subcellular location is the cytoplasm. Functionally, activator of cell division through the inhibition of FtsZ GTPase activity, therefore promoting FtsZ assembly into bundles of protofilaments necessary for the formation of the division Z ring. It is recruited early at mid-cell but it is not essential for cell division. The chain is Cell division protein ZapA from Yersinia enterocolitica serotype O:8 / biotype 1B (strain NCTC 13174 / 8081).